The following is a 436-amino-acid chain: Glutamate-1-semialdehyde 2,1-aminomutase 2 (436 aa).

At lysine 271 the chain carries N6-(pyridoxal phosphate)lysine.

The protein belongs to the class-III pyridoxal-phosphate-dependent aminotransferase family. HemL subfamily. Homodimer. It depends on pyridoxal 5'-phosphate as a cofactor.

Its subcellular location is the cytoplasm. The catalysed reaction is (S)-4-amino-5-oxopentanoate = 5-aminolevulinate. Its pathway is porphyrin-containing compound metabolism; protoporphyrin-IX biosynthesis; 5-aminolevulinate from L-glutamyl-tRNA(Glu): step 2/2. The protein is Glutamate-1-semialdehyde 2,1-aminomutase 2 of Exiguobacterium sibiricum (strain DSM 17290 / CCUG 55495 / CIP 109462 / JCM 13490 / 255-15).